The following is a 436-amino-acid chain: Enolase 1 (436 aa).

Position 40 (Ser-40) interacts with Mg(2+). A disulfide bridge links Cys-147 with Cys-169. (2R)-2-phosphoglycerate-binding residues include Gln-164 and Glu-208. Glu-208 functions as the Proton donor in the catalytic mechanism. Asp-243, Glu-296, and Asp-322 together coordinate Mg(2+). Asp-322 serves as a coordination point for (2R)-2-phosphoglycerate. Lys-347 functions as the Proton acceptor in the catalytic mechanism. (2R)-2-phosphoglycerate is bound by residues Arg-376 and Ser-377.

It belongs to the enolase family. In terms of assembly, homodimer. Homotetramer. Interacts with methyltransferase METH; the interaction inhibits METH catalytic activity; 2-phosphoglycerate binding to ENO prevents the interaction with METH. Mg(2+) serves as cofactor.

Its subcellular location is the cytoplasm. It localises to the nucleus. It catalyses the reaction (2R)-2-phosphoglycerate = phosphoenolpyruvate + H2O. Its pathway is carbohydrate degradation; glycolysis; pyruvate from D-glyceraldehyde 3-phosphate: step 4/5. Glycolytic enzyme that catalyzes the conversion of 2-phosphoglycerate to phosphoenolpyruvate. Inhibits tRNA methyltransferase METH catalytic activity in the absence of 2-phosphoglycerate. This Entamoeba histolytica (strain ATCC 30459 / HM-1:IMSS / ABRM) protein is Enolase 1.